Consider the following 104-residue polypeptide: N(4)-acetylcytidine amidohydrolase (104 aa).

In terms of domain architecture, ASCH spans 7–104 (TFFTRFEQDI…FWVIAFELVD (98 aa)). Lys-21 serves as the catalytic Proton acceptor. The active-site Nucleophile is the Thr-24. Catalysis depends on Glu-74, which acts as the Proton donor.

Belongs to the N(4)-acetylcytidine amidohydrolase family.

It carries out the reaction N(4)-acetylcytidine + H2O = cytidine + acetate + H(+). It catalyses the reaction N(4)-acetyl-2'-deoxycytidine + H2O = 2'-deoxycytidine + acetate + H(+). The catalysed reaction is N(4)-acetylcytosine + H2O = cytosine + acetate + H(+). Catalyzes the hydrolysis of N(4)-acetylcytidine (ac4C). In Pasteurella multocida (strain Pm70), this protein is N(4)-acetylcytidine amidohydrolase.